A 1010-amino-acid chain; its full sequence is Retinoblastoma-related protein 1 (1010 aa).

Residues 1 to 23 (MEGAAPPASSGSEVTGAGSGKVD) are disordered. The domain A stretch occupies residues 419–619 (TPVSTAMTTA…EKGSSMYNSL (201 aa)). The interval 419–861 (TPVSTAMTTA…NEVFIPTVKP (443 aa)) is pocket. Positions 620–730 (IVARPTLSAE…PAAGGELCAE (111 aa)) are spacer. The disordered stretch occupies residues 657–679 (LPPLPFQKQEHSPDKDEVRSPKR). Residues 664–679 (KQEHSPDKDEVRSPKR) show a composition bias toward basic and acidic residues. The segment at 731–861 (TGIGVFLSKI…NEVFIPTVKP (131 aa)) is domain B. A disordered region spans residues 868–898 (SGTSPNKKNEEKCAADGPYPESPRLSRFPNL).

It belongs to the retinoblastoma protein (RB) family.

It localises to the nucleus. In terms of biological role, regulator of biological processes that recruits a histone deacetylase to control gene transcription. May play a role in the entry into mitosis, negatively regulating the cell proliferation. Formation of stable complexes with geminiviridae replication-associated proteins may create a cellular environment which favors viral DNA replication. In Oryza sativa subsp. indica (Rice), this protein is Retinoblastoma-related protein 1 (RBR1).